The sequence spans 549 residues: MAPKRKPPARAAAAKLDPDGMFRGVSAFVVPHAVQSRRLEVWKQRLAQMGGRVQEKLAAKGGGGAVTHVLAADAKALLRELDAAWLHRFRGSVVSFEWLEECLKSGERLPEHKFAINYEEEFKPKKEGGAAGSGVLQSAKRSKISSDGPENRKETAGGNRESRDAIAHPNEDSDVVKGPSTCTSSQSASGDSKETIASQNAFKAEEASSGESSTYAPPDLNRNITEIFGKLINIYRALGDDRRSFSYYKAIPVIEKLPFKIESADQVKDLPAIGKSLKDHINEIVNTGKLSKLEHFENDEKVRTVSLFGEVWGVGPATALKLYDKGHRTLDDLQKDDSLTSAQRIGLKFFDDIKQRIPRHEVSEMEKLLQEVGTDILPGVIIVCGGSYRRGKSSCGDMDIIITHPDGESHVGFLPKFVQRLKGINFLREDLIFSIHSIEGTDCGVDTYFGLCTYPGRELRHRIDLKVYPRNRHAFGLLAWTGNDVLNRRLRILADSKGYILDDTGLYLATPGSGGKRGGRSDAIINCDTEKDVFDTLGFPWLEPHERNL.

One can recognise a BRCT domain in the interval 17 to 116 (DPDGMFRGVS…ERLPEHKFAI (100 aa)). Residues 126-197 (KEGGAAGSGV…ASGDSKETIA (72 aa)) are disordered. The span at 149 to 175 (PENRKETAGGNRESRDAIAHPNEDSDV) shows a compositional bias: basic and acidic residues. Over residues 180–197 (STCTSSQSASGDSKETIA) the composition is skewed to polar residues. The interval 233–247 (NIYRALGDDRRSFSY) is DNA-binding. Residue His-280 is part of the active site. Positions 315-318 (GPAT) are DNA-binding. DCTP contacts are provided by residues Arg-356, 387-390 (SYRR), and 396-399 (GDMD). The tract at residues 390–399 (RGKSSCGDMD) is involved in primer binding. Mn(2+) contacts are provided by Asp-397, Asp-399, and Asp-464. Positions 438–479 (IEGTDCGVDTYFGLCTYPGRELRHRIDLKVYPRNRHAFGLLA) are DNA-binding. Residue Asn-487 coordinates dCTP.

The protein belongs to the DNA polymerase type-X family. As to quaternary structure, interacts with PCNA. Requires Mn(2+) as cofactor. Expressed in proliferating tissues. Expressed in roots, root apex, young leaves, shoot apical meristem (SAM), flag leaves and panicles.

Its subcellular location is the nucleus. It catalyses the reaction DNA(n) + a 2'-deoxyribonucleoside 5'-triphosphate = DNA(n+1) + diphosphate. Repair polymerase involved in base excision repair (BER) and responsible for repair of lesions that give rise to abasic (AP) sites in DNA. Has both DNA polymerase and terminal transferase activities. Has a 5'-deoxyribose-5-phosphate lyase (dRP lyase) activity. This is DNA polymerase lambda from Oryza sativa subsp. japonica (Rice).